Consider the following 317-residue polypeptide: Proline iminopeptidase (317 aa).

The AB hydrolase-1 domain maps to 41–296 (VFIHGGPGGG…ELHIVEGAGH (256 aa)). Catalysis depends on Ser113, which acts as the Nucleophile. Asp268 is an active-site residue. Residue His296 is the Proton donor of the active site.

It belongs to the peptidase S33 family. Monomer.

It localises to the cytoplasm. It catalyses the reaction Release of N-terminal proline from a peptide.. Specifically catalyzes the removal of N-terminal proline residues from peptides. In Serratia marcescens, this protein is Proline iminopeptidase (pip).